The following is a 622-amino-acid chain: MKQSFEGFMKTAMEKKTLDFDNLTKPVFLTKAHRKELALKRCQDEIADRDRRSIVQISRSNSDNDDGNRPRDVKRERHRSHDHDRNRESDREFREREVKARVEKLEMVKREKEINAMKEQYLGTTKPKKRVIMKPSKNFRFDWENTEDTLSGEMNVLYQNPHEAQPLFGRGCRAGIDRREQKKLMTGKHEREKREEEDKHWSEKKLEEMNERDWRIFKEDFNISYRGSKIPHPMRNWEETIPLGLEQRDVIGISATGSGKTAAFVLPMLAYISRLPPMREENQTEGPYALVMVPTRELAHQIEEETVKFSRYLGFKAVSITGWESIEKQALKLSQGCEIVIATPGRLLDCLERRYVVLNQCNYLVLDEADRMIDMDFEPQVSEVLDVMPCSNLKPEKEDEELEEKKIYRTTYMFSATMLLSVERLARKFLRNPVVVTIGETTKFITQQVIMTKESDKFSRLKKLIDDLGDDKTAIVFVNTRNKVDYIVKNLEKVGRCRVTTLHAGKSQEQRDYSLEEFKKKRFNVLVTTDVLGRGLDILDLAQVINYDMPNTMDLYTHRIGRTGRAGKTGVATTFLTLEDKDVFYGLKQKLNECNSLVPPELARHEASKFKPGTFPDRFSHF.

A disordered region spans residues 50–97 (DRRSIVQISRSNSDNDDGNRPRDVKRERHRSHDHDRNRESDREFRERE). The segment covering 66 to 97 (DGNRPRDVKRERHRSHDHDRNRESDREFRERE) has biased composition (basic and acidic residues). In terms of domain architecture, Helicase ATP-binding spans 241–436 (IPLGLEQRDV…RKFLRNPVVV (196 aa)). ATP is bound at residue 254-261 (SATGSGKT). The DEAD box motif lies at 367–370 (DEAD). Positions 460-606 (RLKKLIDDLG…LVPPELARHE (147 aa)) constitute a Helicase C-terminal domain.

It belongs to the DEAD box helicase family. DDX23/PRP28 subfamily.

The catalysed reaction is ATP + H2O = ADP + phosphate + H(+). The chain is Putative DEAD-box ATP-dependent RNA helicase 44 (RH44) from Arabidopsis thaliana (Mouse-ear cress).